Reading from the N-terminus, the 478-residue chain is Trigger factor (478 aa).

Basic and acidic residues predominate over residues 154 to 167 (MAKDSRSFEPREEG). Disordered stretches follow at residues 154 to 173 (MAKD…AQSG) and 441 to 478 (KEAL…KAAG). The PPIase FKBP-type domain occupies 173–258 (GDRVTIDFVG…VKAVAAPGET (86 aa)).

This sequence belongs to the FKBP-type PPIase family. Tig subfamily.

Its subcellular location is the cytoplasm. The catalysed reaction is [protein]-peptidylproline (omega=180) = [protein]-peptidylproline (omega=0). Involved in protein export. Acts as a chaperone by maintaining the newly synthesized protein in an open conformation. Functions as a peptidyl-prolyl cis-trans isomerase. The protein is Trigger factor of Methylorubrum extorquens (strain CM4 / NCIMB 13688) (Methylobacterium extorquens).